A 577-amino-acid chain; its full sequence is Torulene dioxygenase (577 aa).

The tract at residues 1–20 (MALNGPGVYHRTREHEQEDA) is disordered. Fe(2+) is bound by residues His239, His291, His361, and His570.

The protein belongs to the carotenoid oxygenase family. Fe(2+) serves as cofactor.

The protein localises to the cytoplasm. Its subcellular location is the cytosol. The catalysed reaction is torulene + O2 = 4'-apo-beta-carotenal + 3-methyl-2-butenal. It functions in the pathway carotenoid biosynthesis. Torulene dioxygenase; part of pathway that mediates the biosynthesis of neurosporaxanthin, a carboxylic apocarotenoid acting as an essential protective pigments and leading to orange pigmentation. CarT mediates the cleavage of torulene into beta-apo-4'-carotenal, the aldehyde corresponding to the acidic neurosporaxanthin. Is also active on other monocyclic synthetic substrates such as beta-apo-8'-carotenal and beta-apo-10'-carotenal to produce beta-apo-14'-carotenal and retinal(beta-apo-15'-carotenal), respectively. Neurosporaxanthin is synthesized from geranyl-geranyl pyrophosphate (GGPP) through several enzymatic activities. Phytoene synthase activity performed by the bifunctional enzyme carAR first produces phytoene from geranyl-geranyl pyrophosphate (GGPP). The phytoene dehydrogenase carB then introduces 4 desaturations to lead to lycopene which is substrate of the carotene cyclase activity of carAR that leads to the production of gamma-carotene. CarB then performs a 5th desaturation reaction to yield torulene. Torulene is the substrate of the dioxidase carT that breaks the molecule, removing five carbon atoms to yield beta-apo-4'-carotenal, whereas the aldehyde dehydrogenase carD mediates the last step by converting beta-apo-4'-carotenal into neurosporaxanthin. The sequence is that of Torulene dioxygenase from Gibberella fujikuroi (strain CBS 195.34 / IMI 58289 / NRRL A-6831) (Bakanae and foot rot disease fungus).